The chain runs to 437 residues: Testis-specific Y-encoded-like protein 1 (437 aa).

The segment at 1 to 81 (MSGLDGVKRT…QDAAGRGGTP (81 aa)) is disordered. A compositionally biased stretch (polar residues) spans 11 to 26 (TPLQTHSIIISDQVPS). Basic and acidic residues predominate over residues 28–40 (QDAHQYLRLRDQS). Lys156 participates in a covalent cross-link: Glycyl lysine isopeptide (Lys-Gly) (interchain with G-Cter in SUMO2).

This sequence belongs to the nucleosome assembly protein (NAP) family. Post-translationally, ubiquitinated by the CRL2(APPBP2) complex, which recognizes the Arg-Xaa-Xaa-Gly sequence at the C-terminus, leading to its degradation. In terms of tissue distribution, expressed in testis, ovary, liver, spleen, brain, kidney, prostate, lung, liver, and heart.

The protein resides in the nucleus. The protein localises to the nucleolus. The chain is Testis-specific Y-encoded-like protein 1 (TSPYL1) from Homo sapiens (Human).